We begin with the raw amino-acid sequence, 404 residues long: Cysteine desulfurase IscS (404 aa).

Residues 75–76 (AT), N155, Q183, and 203–205 (SGH) each bind pyridoxal 5'-phosphate. K206 is modified (N6-(pyridoxal phosphate)lysine). Pyridoxal 5'-phosphate is bound at residue T243. The Cysteine persulfide intermediate role is filled by C328. A [2Fe-2S] cluster-binding site is contributed by C328.

The protein belongs to the class-V pyridoxal-phosphate-dependent aminotransferase family. NifS/IscS subfamily. In terms of assembly, homodimer. Forms a heterotetramer with IscU, interacts with other sulfur acceptors. Pyridoxal 5'-phosphate serves as cofactor.

Its subcellular location is the cytoplasm. The enzyme catalyses (sulfur carrier)-H + L-cysteine = (sulfur carrier)-SH + L-alanine. The protein operates within cofactor biosynthesis; iron-sulfur cluster biosynthesis. Its function is as follows. Master enzyme that delivers sulfur to a number of partners involved in Fe-S cluster assembly, tRNA modification or cofactor biosynthesis. Catalyzes the removal of elemental sulfur atoms from cysteine to produce alanine. Functions as a sulfur delivery protein for Fe-S cluster synthesis onto IscU, an Fe-S scaffold assembly protein, as well as other S acceptor proteins. This Shewanella denitrificans (strain OS217 / ATCC BAA-1090 / DSM 15013) protein is Cysteine desulfurase IscS.